An 80-amino-acid polypeptide reads, in one-letter code: MKNNYISTCIVYLMAALLLISVISIKECTADISDYGDPCSDDLKDYCIHGDCFFLKELNQPACRCYTGYYGSRCEHIDHN.

The signal sequence occupies residues 1–30 (MKNNYISTCIVYLMAALLLISVISIKECTA). The EGF-like domain occupies 35 to 75 (YGDPCSDDLKDYCIHGDCFFLKELNQPACRCYTGYYGSRCE). Cystine bridges form between Cys39/Cys52, Cys47/Cys63, and Cys65/Cys74.

It belongs to the EGF domain peptide family. As to expression, expressed by the venom gland.

Its subcellular location is the secreted. Its function is as follows. Ant peptide with probable defensive activity which acts as a potent agonist of the mammalian epidermal growth factor receptor (EGFR) (EC(50)=6.3 nM). Mimics, both structurally and functionally, vertebrate epidermal growth factor (EGF) peptide hormones. In vivo, intraplantar injection in mice causes long-lasting (several days) hypersensitivity of the injected paw to both mechanical and thermal stimuli. Its long-lasting effect is unusual for venom toxins whose effects are usually immediate. One possible explanation is that it would reduce the duration of a nest attack, discourage future attacks, or enhance the actions of subsequent exposure to other pain-inducing venom peptides. In Myrmecia gulosa (Red bulldog ant), this protein is OMEGA-myrmeciitoxin(02)-Mg1a.